Consider the following 446-residue polypeptide: Enolase (446 aa).

Residues His164 and Glu173 each contribute to the substrate site. The Proton donor role is filled by Glu216. Asp251, Glu302, and Asp329 together coordinate Mg(2+). Residues Glu302 and Asp329 each coordinate substrate. Lys354 acts as the Proton acceptor in catalysis. Residues 381–384 (SHRS) and Lys405 each bind substrate.

This sequence belongs to the enolase family. As to quaternary structure, homodimer. Requires Mg(2+) as cofactor.

It is found in the cytoplasm. It carries out the reaction (2R)-2-phosphoglycerate = phosphoenolpyruvate + H2O. The protein operates within carbohydrate degradation; glycolysis; pyruvate from D-glyceraldehyde 3-phosphate: step 4/5. The polypeptide is Enolase (ENO1) (Oryza sativa subsp. japonica (Rice)).